A 164-amino-acid polypeptide reads, in one-letter code: FMN reductase (NADH) RutF (164 aa).

The protein belongs to the non-flavoprotein flavin reductase family. RutF subfamily.

The catalysed reaction is FMNH2 + NAD(+) = FMN + NADH + 2 H(+). Catalyzes the reduction of FMN to FMNH2 which is used to reduce pyrimidine by RutA via the Rut pathway. In Escherichia coli O81 (strain ED1a), this protein is FMN reductase (NADH) RutF.